Reading from the N-terminus, the 204-residue chain is NADH-quinone oxidoreductase subunit C (204 aa).

It belongs to the complex I 30 kDa subunit family. As to quaternary structure, NDH-1 is composed of 14 different subunits. Subunits NuoB, C, D, E, F, and G constitute the peripheral sector of the complex.

The protein resides in the cell inner membrane. The enzyme catalyses a quinone + NADH + 5 H(+)(in) = a quinol + NAD(+) + 4 H(+)(out). NDH-1 shuttles electrons from NADH, via FMN and iron-sulfur (Fe-S) centers, to quinones in the respiratory chain. The immediate electron acceptor for the enzyme in this species is believed to be ubiquinone. Couples the redox reaction to proton translocation (for every two electrons transferred, four hydrogen ions are translocated across the cytoplasmic membrane), and thus conserves the redox energy in a proton gradient. This Polaromonas naphthalenivorans (strain CJ2) protein is NADH-quinone oxidoreductase subunit C.